The chain runs to 186 residues: Ribosome-recycling factor (186 aa).

The interval 135 to 164 (DGMDDLKKAEKDGEIGQDESRAQSERVQKM) is disordered.

The protein belongs to the RRF family.

It is found in the cytoplasm. In terms of biological role, responsible for the release of ribosomes from messenger RNA at the termination of protein biosynthesis. May increase the efficiency of translation by recycling ribosomes from one round of translation to another. The polypeptide is Ribosome-recycling factor (Rhizobium meliloti (strain 1021) (Ensifer meliloti)).